The sequence spans 692 residues: Structure-specific endonuclease subunit SLX4 (692 aa).

The interval 39–59 (SDDEDQDEEQETEIPPEEGDD) is disordered.

Belongs to the SLX4 family. In terms of assembly, forms a heterodimer with SLX1. Phosphorylated in response to DNA damage.

It is found in the nucleus. Functionally, regulatory subunit of the SLX1-SLX4 structure-specific endonuclease that resolves DNA secondary structures generated during DNA repair and recombination. Has endonuclease activity towards branched DNA substrates, introducing single-strand cuts in duplex DNA close to junctions with ss-DNA. The protein is Structure-specific endonuclease subunit SLX4 of Kluyveromyces lactis (strain ATCC 8585 / CBS 2359 / DSM 70799 / NBRC 1267 / NRRL Y-1140 / WM37) (Yeast).